An 839-amino-acid chain; its full sequence is Heat shock 70 kDa protein 4L (839 aa).

Ser-74 and Ser-508 each carry phosphoserine. The span at 503–554 shows a compositional bias: basic and acidic residues; it reads LEGDHSDAPMETETSFKNENKDNMDKMQVDQEEGHQKCHAEHTPEEEIDHTG. Residues 503–567 form a disordered region; sequence LEGDHSDAPM…KSAVSDKQDR (65 aa). Thr-545 carries the post-translational modification Phosphothreonine. Phosphoserine is present on Ser-579. Thr-761 is subject to Phosphothreonine. The interval 786–839 is disordered; sequence IYKPKPKAEVPEDKPKANSEHNGPMDGQSGTETKSDSTKDSSQHTKSSGEMEVD. 2 stretches are compositionally biased toward basic and acidic residues: residues 791–804 and 818–839; these read PKAE…KANS and TKSD…MEVD.

Belongs to the heat shock protein 70 family. Homodimer.

It is found in the cytoplasm. The protein resides in the nucleus. Its function is as follows. Possesses chaperone activity in vitro where it inhibits aggregation of citrate synthase. This chain is Heat shock 70 kDa protein 4L (HSPA4L), found in Homo sapiens (Human).